Consider the following 277-residue polypeptide: Phosphate import ATP-binding protein PstB 2 (277 aa).

The 242-residue stretch at 31-272 folds into the ABC transporter domain; sequence IEVPGLNLFY…PAKKQTEDYI (242 aa). ATP is bound at residue 63 to 70; the sequence is GPSGCGKS.

The protein belongs to the ABC transporter superfamily. Phosphate importer (TC 3.A.1.7) family. The complex is composed of two ATP-binding proteins (PstB), two transmembrane proteins (PstC and PstA) and a solute-binding protein (PstS).

It localises to the cell inner membrane. The enzyme catalyses phosphate(out) + ATP + H2O = ADP + 2 phosphate(in) + H(+). In terms of biological role, part of the ABC transporter complex PstSACB involved in phosphate import. Responsible for energy coupling to the transport system. This is Phosphate import ATP-binding protein PstB 2 from Pseudomonas savastanoi pv. phaseolicola (strain 1448A / Race 6) (Pseudomonas syringae pv. phaseolicola (strain 1448A / Race 6)).